Consider the following 256-residue polypeptide: Homeobox-leucine zipper protein HOX18 (256 aa).

Residues tyrosine 52–leucine 117 are disordered. The segment covering aspartate 102–glycine 112 has biased composition (gly residues). Residues glycine 112–glutamine 171 constitute a DNA-binding region (homeobox). The interval lysine 170–glutamine 214 is leucine-zipper.

It belongs to the HD-ZIP homeobox family. Class II subfamily. In terms of tissue distribution, expressed in roots, leaf sheaths and blades and panicles.

The protein localises to the nucleus. Functionally, probable transcription factor. The sequence is that of Homeobox-leucine zipper protein HOX18 (HOX18) from Oryza sativa subsp. indica (Rice).